A 272-amino-acid chain; its full sequence is HMP-PP phosphatase (272 aa).

Asp8 (nucleophile) is an active-site residue. Residues Asp8, Asp10, and Asp212 each contribute to the Mg(2+) site.

This sequence belongs to the HAD-like hydrolase superfamily. Cof family. Mg(2+) serves as cofactor.

It carries out the reaction 4-amino-2-methyl-5-(diphosphooxymethyl)pyrimidine + H2O = 4-amino-2-methyl-5-(phosphooxymethyl)pyrimidine + phosphate + H(+). In terms of biological role, catalyzes the hydrolysis of 4-amino-2-methyl-5-hydroxymethylpyrimidine pyrophosphate (HMP-PP) to 4-amino-2-methyl-5-hydroxymethylpyrimidine phosphate (HMP-P). The sequence is that of HMP-PP phosphatase from Salmonella enteritidis PT4 (strain P125109).